A 78-amino-acid chain; its full sequence is Acyl carrier protein (78 aa).

In terms of domain architecture, Carrier spans 2–77; that stretch reads SNIEERVKKI…AAIDYVTSNA (76 aa). Ser-37 bears the O-(pantetheine 4'-phosphoryl)serine mark.

The protein belongs to the acyl carrier protein (ACP) family. 4'-phosphopantetheine is transferred from CoA to a specific serine of apo-ACP by AcpS. This modification is essential for activity because fatty acids are bound in thioester linkage to the sulfhydryl of the prosthetic group.

The protein localises to the cytoplasm. It functions in the pathway lipid metabolism; fatty acid biosynthesis. Carrier of the growing fatty acid chain in fatty acid biosynthesis. This is Acyl carrier protein from Vibrio cholerae serotype O1 (strain ATCC 39315 / El Tor Inaba N16961).